Consider the following 62-residue polypeptide: Photosystem II reaction center protein Z (62 aa).

Helical transmembrane passes span 8–28 (ALIALVLFSFVMVIGVPVAYA) and 41–61 (YLGSAIWAILVVIVAILNFFV).

It belongs to the PsbZ family. In terms of assembly, PSII is composed of 1 copy each of membrane proteins PsbA, PsbB, PsbC, PsbD, PsbE, PsbF, PsbH, PsbI, PsbJ, PsbK, PsbL, PsbM, PsbT, PsbX, PsbY, PsbZ, Psb30/Ycf12, peripheral proteins PsbO, CyanoQ (PsbQ), PsbU, PsbV and a large number of cofactors. It forms dimeric complexes.

The protein resides in the cellular thylakoid membrane. May control the interaction of photosystem II (PSII) cores with the light-harvesting antenna, regulates electron flow through the 2 photosystem reaction centers. PSII is a light-driven water plastoquinone oxidoreductase, using light energy to abstract electrons from H(2)O, generating a proton gradient subsequently used for ATP formation. In Rippkaea orientalis (strain PCC 8801 / RF-1) (Cyanothece sp. (strain PCC 8801)), this protein is Photosystem II reaction center protein Z.